The sequence spans 248 residues: tRNA pseudouridine synthase A (248 aa).

Asp-53 acts as the Nucleophile in catalysis. Tyr-111 is a substrate binding site.

Belongs to the tRNA pseudouridine synthase TruA family. In terms of assembly, homodimer.

The enzyme catalyses uridine(38/39/40) in tRNA = pseudouridine(38/39/40) in tRNA. Its function is as follows. Formation of pseudouridine at positions 38, 39 and 40 in the anticodon stem and loop of transfer RNAs. The protein is tRNA pseudouridine synthase A of Listeria welshimeri serovar 6b (strain ATCC 35897 / DSM 20650 / CCUG 15529 / CIP 8149 / NCTC 11857 / SLCC 5334 / V8).